A 362-amino-acid chain; its full sequence is Biotin synthase (362 aa).

The region spanning 46–273 (NEVQVSTLLS…ASHVRLSAGR (228 aa)) is the Radical SAM core domain. Residues cysteine 61, cysteine 65, and cysteine 68 each coordinate [4Fe-4S] cluster. Cysteine 105, cysteine 136, cysteine 196, and arginine 268 together coordinate [2Fe-2S] cluster. Residues 320-339 (PAQRAQKPDQVQEEELLAEV) are disordered.

The protein belongs to the radical SAM superfamily. Biotin synthase family. Homodimer. It depends on [4Fe-4S] cluster as a cofactor. Requires [2Fe-2S] cluster as cofactor.

The enzyme catalyses (4R,5S)-dethiobiotin + (sulfur carrier)-SH + 2 reduced [2Fe-2S]-[ferredoxin] + 2 S-adenosyl-L-methionine = (sulfur carrier)-H + biotin + 2 5'-deoxyadenosine + 2 L-methionine + 2 oxidized [2Fe-2S]-[ferredoxin]. It functions in the pathway cofactor biosynthesis; biotin biosynthesis; biotin from 7,8-diaminononanoate: step 2/2. In terms of biological role, catalyzes the conversion of dethiobiotin (DTB) to biotin by the insertion of a sulfur atom into dethiobiotin via a radical-based mechanism. This is Biotin synthase from Aeromonas hydrophila subsp. hydrophila (strain ATCC 7966 / DSM 30187 / BCRC 13018 / CCUG 14551 / JCM 1027 / KCTC 2358 / NCIMB 9240 / NCTC 8049).